A 380-amino-acid chain; its full sequence is Succinyl-diaminopimelate desuccinylase (380 aa).

Histidine 69 lines the Zn(2+) pocket. The active site involves aspartate 71. Residue aspartate 102 participates in Zn(2+) binding. Glutamate 135 acts as the Proton acceptor in catalysis. Zn(2+) is bound by residues glutamate 136, glutamate 164, and histidine 353.

It belongs to the peptidase M20A family. DapE subfamily. As to quaternary structure, homodimer. The cofactor is Zn(2+). Co(2+) serves as cofactor.

It carries out the reaction N-succinyl-(2S,6S)-2,6-diaminopimelate + H2O = (2S,6S)-2,6-diaminopimelate + succinate. The protein operates within amino-acid biosynthesis; L-lysine biosynthesis via DAP pathway; LL-2,6-diaminopimelate from (S)-tetrahydrodipicolinate (succinylase route): step 3/3. In terms of biological role, catalyzes the hydrolysis of N-succinyl-L,L-diaminopimelic acid (SDAP), forming succinate and LL-2,6-diaminopimelate (DAP), an intermediate involved in the bacterial biosynthesis of lysine and meso-diaminopimelic acid, an essential component of bacterial cell walls. This Phenylobacterium zucineum (strain HLK1) protein is Succinyl-diaminopimelate desuccinylase.